Here is a 342-residue protein sequence, read N- to C-terminus: S-adenosylmethionine:tRNA ribosyltransferase-isomerase (342 aa).

Belongs to the QueA family. As to quaternary structure, monomer.

The protein localises to the cytoplasm. It catalyses the reaction 7-aminomethyl-7-carbaguanosine(34) in tRNA + S-adenosyl-L-methionine = epoxyqueuosine(34) in tRNA + adenine + L-methionine + 2 H(+). It functions in the pathway tRNA modification; tRNA-queuosine biosynthesis. Its function is as follows. Transfers and isomerizes the ribose moiety from AdoMet to the 7-aminomethyl group of 7-deazaguanine (preQ1-tRNA) to give epoxyqueuosine (oQ-tRNA). The sequence is that of S-adenosylmethionine:tRNA ribosyltransferase-isomerase from Campylobacter jejuni (strain RM1221).